The following is a 226-amino-acid chain: ATP-dependent Clp protease proteolytic subunit 4 (226 aa).

Catalysis depends on serine 122, which acts as the Nucleophile. Histidine 147 is a catalytic residue.

The protein belongs to the peptidase S14 family. In terms of assembly, fourteen ClpP subunits assemble into 2 heptameric rings which stack back to back to give a disk-like structure with a central cavity, resembling the structure of eukaryotic proteasomes.

The protein localises to the cytoplasm. It catalyses the reaction Hydrolysis of proteins to small peptides in the presence of ATP and magnesium. alpha-casein is the usual test substrate. In the absence of ATP, only oligopeptides shorter than five residues are hydrolyzed (such as succinyl-Leu-Tyr-|-NHMec, and Leu-Tyr-Leu-|-Tyr-Trp, in which cleavage of the -Tyr-|-Leu- and -Tyr-|-Trp bonds also occurs).. In terms of biological role, cleaves peptides in various proteins in a process that requires ATP hydrolysis. Has a chymotrypsin-like activity. Plays a major role in the degradation of misfolded proteins. This Streptomyces avermitilis (strain ATCC 31267 / DSM 46492 / JCM 5070 / NBRC 14893 / NCIMB 12804 / NRRL 8165 / MA-4680) protein is ATP-dependent Clp protease proteolytic subunit 4.